A 429-amino-acid polypeptide reads, in one-letter code: Light-independent protochlorophyllide reductase subunit N (429 aa).

[4Fe-4S] cluster is bound by residues Cys-32, Cys-57, and Cys-118.

It belongs to the BchN/ChlN family. As to quaternary structure, protochlorophyllide reductase is composed of three subunits; BchL, BchN and BchB. Forms a heterotetramer of two BchB and two BchN subunits. [4Fe-4S] cluster is required as a cofactor.

The catalysed reaction is chlorophyllide a + oxidized 2[4Fe-4S]-[ferredoxin] + 2 ADP + 2 phosphate = protochlorophyllide a + reduced 2[4Fe-4S]-[ferredoxin] + 2 ATP + 2 H2O. Its pathway is porphyrin-containing compound metabolism; bacteriochlorophyll biosynthesis (light-independent). Functionally, component of the dark-operative protochlorophyllide reductase (DPOR) that uses Mg-ATP and reduced ferredoxin to reduce ring D of protochlorophyllide (Pchlide) to form chlorophyllide a (Chlide). This reaction is light-independent. The NB-protein (BchN-BchB) is the catalytic component of the complex. The sequence is that of Light-independent protochlorophyllide reductase subunit N from Rhodopseudomonas palustris (strain ATCC BAA-98 / CGA009).